Reading from the N-terminus, the 397-residue chain is MALLRGVFIVAAKRTPFGAYGGLLKDFTATDLTEFAARAALSAGKVPPETIDSVIVGNVMQSSSDAAYLARHVGLRVGVPTETGALTLNRLCGSGFQSIVSGCQEICSKDAEVVLCGGTESMSQSPYSVRNVRFGTKFGLDLKLEDTLWAGLTDQHVKLPMGMTAENLAAKYNISREDCDRYALQSQQRWKAANEAGYFNEEMAPIEVKTKKGKQTMQVDEHARPQTTLEQLQNLPPVFKKEGTVTAGNASGMSDGAGVVIIASEDAVKKHNFTPLARVVGYFVSGCDPAIMGIGPVPAITGALKKAGLSLKDMDLIDVNEAFAPQFLAVQKSLDLDPSKTNVSGGAIALGHPLGGSGSRITAHLVHELRRRGGKYAVGSACIGGGQGISLIIQNTA.

A mitochondrion; not cleaved-targeting transit peptide spans 1 to 16; sequence MALLRGVFIVAAKRTP. Lys-25 is modified (N6-acetyllysine; alternate). Lys-25 bears the N6-succinyllysine; alternate mark. N6-succinyllysine is present on Lys-45. The active-site Acyl-thioester intermediate is Cys-92. At Thr-119 the chain carries Phosphothreonine. Phosphoserine is present on Ser-121. Position 127 is a phosphotyrosine (Tyr-127). Thr-136 bears the Phosphothreonine mark. 6 positions are modified to N6-acetyllysine; alternate: Lys-137, Lys-143, Lys-158, Lys-171, Lys-191, and Lys-209. N6-succinyllysine; alternate is present on residues Lys-137, Lys-143, Lys-158, Lys-171, Lys-191, and Lys-209. 3 positions are modified to N6-succinyllysine: Lys-211, Lys-212, and Lys-214. Residues Arg-224 and Thr-227 each contribute to the CoA site. The residue at position 240 (Lys-240) is an N6-succinyllysine. Lys-241 carries the N6-acetyllysine modification. Position 251 (Ser-251) interacts with CoA. Lys-269 and Lys-270 each carry N6-acetyllysine. Position 305 is an N6-acetyllysine; alternate (Lys-305). An N6-succinyllysine; alternate modification is found at Lys-305. The residue at position 310 (Ser-310) is a Phosphoserine. Residue Lys-312 is modified to N6-acetyllysine; alternate. At Lys-312 the chain carries N6-succinyllysine; alternate. At Ser-333 the chain carries Phosphoserine. Lys-340 is modified (N6-acetyllysine). At Ser-344 the chain carries Phosphoserine. N6-acetyllysine is present on Lys-375. The active-site Proton donor/acceptor is Cys-382.

This sequence belongs to the thiolase-like superfamily. Thiolase family. As to quaternary structure, homotetramer. Interacts with BNIP3. In terms of tissue distribution, expressed in liver, brown adipose tissue and heart (at protein level).

Its subcellular location is the mitochondrion. The catalysed reaction is an acyl-CoA + acetyl-CoA = a 3-oxoacyl-CoA + CoA. It catalyses the reaction 2 acetyl-CoA = acetoacetyl-CoA + CoA. It carries out the reaction acetyl-CoA + H2O = acetate + CoA + H(+). The enzyme catalyses propanoyl-CoA + H2O = propanoate + CoA + H(+). The catalysed reaction is butanoyl-CoA + H2O = butanoate + CoA + H(+). It catalyses the reaction hexanoyl-CoA + H2O = hexanoate + CoA + H(+). It carries out the reaction octanoyl-CoA + H2O = octanoate + CoA + H(+). The enzyme catalyses decanoyl-CoA + H2O = decanoate + CoA + H(+). The catalysed reaction is dodecanoyl-CoA + H2O = dodecanoate + CoA + H(+). It catalyses the reaction tetradecanoyl-CoA + H2O = tetradecanoate + CoA + H(+). It carries out the reaction hexadecanoyl-CoA + H2O = hexadecanoate + CoA + H(+). It functions in the pathway lipid metabolism; fatty acid beta-oxidation. With respect to regulation, the 3-oxoacetyl-CoA thiolase activity is inhibited by acetyl-CoA while the acetyl-CoA hydrolase activity is inhibited by acetoacetyl-CoA. Its function is as follows. In the production of energy from fats, this is one of the enzymes that catalyzes the last step of the mitochondrial beta-oxidation pathway, an aerobic process breaking down fatty acids into acetyl-CoA. Using free coenzyme A/CoA, catalyzes the thiolytic cleavage of medium- to long-chain unbranched 3-oxoacyl-CoAs into acetyl-CoA and a fatty acyl-CoA shortened by two carbon atoms. Also catalyzes the condensation of two acetyl-CoA molecules into acetoacetyl-CoA and could be involved in the production of ketone bodies. Also displays hydrolase activity on various fatty acyl-CoAs. Thereby, could be responsible for the production of acetate in a side reaction to beta-oxidation. Abolishes BNIP3-mediated apoptosis and mitochondrial damage. In Rattus norvegicus (Rat), this protein is 3-ketoacyl-CoA thiolase, mitochondrial (Acaa2).